The sequence spans 350 residues: MAQWTLLIVFFCVATAAAGLSFHDSNPIRMVSDMEEQLLQVIGESRHAVSFARFANRYGKRYDTVDEMKRRFKIFSENLQLIKSTNKKRLGYTLGVNHFADWTWEEFRSHRLGAAQNCSATLKGNHRITDVVLPAEKDWRKEGIVSEVKDQGHCGSCWTFSTTGALESAYAQAFGKNISLSEQQLVDCAGAYNNFGCNGGLPSQAFEYIKYNGGLETEEAYPYTGQNGLCKFTSENVAVQVLGSVNITLGAEDELKHAVAFARPVSVAFQVVDDFRLYKKGVYTSTTCGSTPMDVNHAVLAVGYGIEDGVPYWLIKNSWGGEWGDHGYFKMEMGKNMCGVATCSSYPVVA.

A signal peptide spans 1-19; sequence MAQWTLLIVFFCVATAAAG. Residues 20-113 constitute a propeptide, activation peptide; that stretch reads LSFHDSNPIR…WEEFRSHRLG (94 aa). The N-linked (GlcNAc...) asparagine glycan is linked to Asn-117. A propeptide spans 122 to 132 (removed in mature form); sequence LKGNHRITDVV. 2 cysteine pairs are disulfide-bonded: Cys-154-Cys-197 and Cys-188-Cys-230. Cys-157 is an active-site residue. Asn-177 is a glycosylation site (N-linked (GlcNAc...) asparagine). N-linked (GlcNAc...) asparagine glycosylation is present at Asn-246. Cysteines 288 and 338 form a disulfide. Residues His-297 and Asn-317 contribute to the active site.

Belongs to the peptidase C1 family. Interacts with KPI104 and KPI106. Composed of a mini chain and a large chain. The large chain may be split into heavy and light chain. All chains are held together by disulfide bonds.

The protein localises to the vacuole. Its subcellular location is the lysosome. The enzyme catalyses Hydrolysis of proteins, acting as an aminopeptidase (notably, cleaving Arg-|-Xaa bonds) as well as an endopeptidase.. Functionally, may play a role in proteolysis leading to mobilization of nitrogen during senescence and starvation. This chain is Pro-cathepsin H, found in Medicago truncatula (Barrel medic).